Reading from the N-terminus, the 212-residue chain is uncharacterized protein (212 aa).

The protein belongs to the methyltransferase superfamily.

This is an uncharacterized protein from Synechocystis sp. (strain ATCC 27184 / PCC 6803 / Kazusa).